The sequence spans 399 residues: Calsequestrin-2 (399 aa).

The N-terminal stretch at 1 to 19 is a signal peptide; the sequence is MKRTHLFIVGIYFLSSCRA. The residue at position 282 (Y282) is a Phosphotyrosine. Residue N335 is glycosylated (N-linked (GlcNAc...) asparagine). The tract at residues 365–399 is disordered; that stretch reads VLSGKINTEDDDEDDDDDDNSDEEDNDDSDDDDDE. Residues 373–399 show a composition bias toward acidic residues; that stretch reads EDDDEDDDDDDNSDEEDNDDSDDDDDE. S385 and S393 each carry phosphoserine.

Belongs to the calsequestrin family. As to quaternary structure, monomer, homodimer and homooligomer. Mostly monomeric in the absence of calcium. Forms higher oligomers in a calcium-dependent manner. Dimers associate to form tetramers, that then form linear homomer chains. Interacts with ASPH and TRDN. Post-translationally, phosphorylation in the C-terminus, probably by CK2, moderately increases calcium buffering capacity. N-glycosylated.

Its subcellular location is the sarcoplasmic reticulum lumen. In terms of biological role, calsequestrin is a high-capacity, moderate affinity, calcium-binding protein and thus acts as an internal calcium store in muscle. Calcium ions are bound by clusters of acidic residues at the protein surface, especially at the interface between subunits. Can bind around 60 Ca(2+) ions. Regulates the release of lumenal Ca(2+) via the calcium release channel RYR2; this plays an important role in triggering muscle contraction. Plays a role in excitation-contraction coupling in the heart and in regulating the rate of heart beats. This Homo sapiens (Human) protein is Calsequestrin-2 (CASQ2).